Reading from the N-terminus, the 216-residue chain is MRLLHLDSSILTDTSVSRQLTAQVVQDLHAAIDDLHATYRDLAAVPIAHLSGAIAAGFRPLPQPASDAALVAEHALSEQLVDEFLASDIVVIGAPMYNFSVPTQLKAWIDRIAQPGRTFRYTANGPEGLAGGKQLIVASSRGGMYTQGPMASLDFQEAYLTATFGFLGVRDVHFVRAENQSRGPEPAAAALISAQASIADVVRSVGRGVAHARVEA.

Residues Ser-9, Ser-15–Ser-17, Met-96–Phe-99, and Ser-140–Gly-143 each bind FMN.

This sequence belongs to the azoreductase type 1 family. As to quaternary structure, homodimer. Requires FMN as cofactor.

It carries out the reaction 2 a quinone + NADH + H(+) = 2 a 1,4-benzosemiquinone + NAD(+). The catalysed reaction is N,N-dimethyl-1,4-phenylenediamine + anthranilate + 2 NAD(+) = 2-(4-dimethylaminophenyl)diazenylbenzoate + 2 NADH + 2 H(+). Its function is as follows. Quinone reductase that provides resistance to thiol-specific stress caused by electrophilic quinones. Also exhibits azoreductase activity. Catalyzes the reductive cleavage of the azo bond in aromatic azo compounds to the corresponding amines. This is FMN-dependent NADH:quinone oxidoreductase 2 from Xanthomonas euvesicatoria pv. vesicatoria (strain 85-10) (Xanthomonas campestris pv. vesicatoria).